The following is a 78-amino-acid chain: Large ribosomal subunit protein bL28 (78 aa).

The tract at residues 1–21 (MSRVCQVTGKRPVSGNNRSHA) is disordered.

Belongs to the bacterial ribosomal protein bL28 family.

In Yersinia enterocolitica serotype O:8 / biotype 1B (strain NCTC 13174 / 8081), this protein is Large ribosomal subunit protein bL28.